Reading from the N-terminus, the 160-residue chain is Cyclic di-GMP-binding protein Smlt4090 (160 aa).

Positions 33, 132, 134, 135, and 160 each coordinate 3',3'-c-di-GMP.

It belongs to the YajQ family.

Its function is as follows. Cyclic di-GMP effector that significantly contributes to virulence. Binds bis-(3',5')-cyclic diguanylate (cyclic di-GMP or c-di-GMP), an important bacterial second messenger that controls a wide range of cellular processes. This chain is Cyclic di-GMP-binding protein Smlt4090, found in Stenotrophomonas maltophilia (strain K279a).